A 32-amino-acid chain; its full sequence is Islet amyloid polypeptide (32 aa).

It belongs to the calcitonin family. In terms of assembly, can form homodimers. Interacts with IDE and INS. Interaction with INS inhibits homodimerization and fibril formation.

The protein localises to the secreted. Functionally, amylin/IAPP is a glucoregulatory peptide hormone that plays an important role in the regulation of energy homeostasis. Selectively inhibits insulin-stimulated glucose utilization and glycogen deposition in muscle, while not affecting adipocyte glucose metabolism. IAPP function is mediated by the CALCR-RAMPs (AMYRs) receptor complexes. Amylin can also bind CALCR receptor in the absence of RAMPs, although it is more selective for AMYRs. The polypeptide is Islet amyloid polypeptide (IAPP) (Ovis aries (Sheep)).